Here is a 326-residue protein sequence, read N- to C-terminus: MISIGVYIHTRSEYPLRWASTEGHVEVVIYLVENGADLNVLKLFYVDKYLQVVKYLIENGSNIHVDDEFTLIYASKGGYLELVNLLIKNGADIHVNDDAPLKWASKNGHLEVVKYLVENGADIHAYNELVVYASEGGHLQIVKYLVKKGADIHAEDDEALKWASRSGHLEVVKYLVEKGANFRAENDYALRWACEKGHLEIVKYLVEKGADIHAEDEYALRWASRSGHLEVVKYLVENGADIHACNDYGLRKASRNRHLNVVKYLMENGANIHAKDDYALRLASVNGHFKLVKFLVENGANIHAKNNEALIRPLGEGHIKIVTYLE.

ANK repeat units lie at residues 11-40 (RSEY…DLNV), 42-65 (KLFY…NIHV), 66-95 (DDEF…DIHV), 96-125 (NDDA…DIHA), 127-154 (NELV…DIHA), 155-184 (EDDE…NFRA), 185-214 (ENDY…DIHA), 216-244 (DEYA…DIHA), 246-274 (NDYG…NIHA), and 275-304 (KDDY…NIHA).

This chain is Putative ankyrin repeat protein L25, found in Acanthamoeba polyphaga mimivirus (APMV).